We begin with the raw amino-acid sequence, 59 residues long: Large ribosomal subunit protein bL32c (59 aa).

Residues 37 to 59 are disordered; it reads SRSFSRGNEHPKPKGFSGQQANK.

This sequence belongs to the bacterial ribosomal protein bL32 family.

The protein localises to the plastid. It localises to the chloroplast. This is Large ribosomal subunit protein bL32c (rpl32) from Zea mays (Maize).